The chain runs to 237 residues: Phosphoribosylaminoimidazole-succinocarboxamide synthase (237 aa).

This sequence belongs to the SAICAR synthetase family.

It catalyses the reaction 5-amino-1-(5-phospho-D-ribosyl)imidazole-4-carboxylate + L-aspartate + ATP = (2S)-2-[5-amino-1-(5-phospho-beta-D-ribosyl)imidazole-4-carboxamido]succinate + ADP + phosphate + 2 H(+). Its pathway is purine metabolism; IMP biosynthesis via de novo pathway; 5-amino-1-(5-phospho-D-ribosyl)imidazole-4-carboxamide from 5-amino-1-(5-phospho-D-ribosyl)imidazole-4-carboxylate: step 1/2. This is Phosphoribosylaminoimidazole-succinocarboxamide synthase from Proteus mirabilis (strain HI4320).